A 168-amino-acid polypeptide reads, in one-letter code: Shikimate kinase (168 aa).

ATP is bound at residue 10–15 (CSGKST). Ser14 is a binding site for Mg(2+). Substrate-binding residues include Asp32, Arg56, and Gly78. Arg116 contributes to the ATP binding site. Arg133 contacts substrate.

It belongs to the shikimate kinase family. Monomer. Requires Mg(2+) as cofactor.

Its subcellular location is the cytoplasm. The enzyme catalyses shikimate + ATP = 3-phosphoshikimate + ADP + H(+). It participates in metabolic intermediate biosynthesis; chorismate biosynthesis; chorismate from D-erythrose 4-phosphate and phosphoenolpyruvate: step 5/7. Functionally, catalyzes the specific phosphorylation of the 3-hydroxyl group of shikimic acid using ATP as a cosubstrate. The protein is Shikimate kinase of Aquifex aeolicus (strain VF5).